Consider the following 328-residue polypeptide: 4-hydroxythreonine-4-phosphate dehydrogenase (328 aa).

Residues histidine 134 and threonine 135 each contribute to the substrate site. Residues histidine 164, histidine 209, and histidine 264 each contribute to the a divalent metal cation site. Residues lysine 272, asparagine 281, and arginine 290 each contribute to the substrate site.

Belongs to the PdxA family. As to quaternary structure, homodimer. Requires Zn(2+) as cofactor. Mg(2+) serves as cofactor. Co(2+) is required as a cofactor.

The protein localises to the cytoplasm. It catalyses the reaction 4-(phosphooxy)-L-threonine + NAD(+) = 3-amino-2-oxopropyl phosphate + CO2 + NADH. It functions in the pathway cofactor biosynthesis; pyridoxine 5'-phosphate biosynthesis; pyridoxine 5'-phosphate from D-erythrose 4-phosphate: step 4/5. Catalyzes the NAD(P)-dependent oxidation of 4-(phosphooxy)-L-threonine (HTP) into 2-amino-3-oxo-4-(phosphooxy)butyric acid which spontaneously decarboxylates to form 3-amino-2-oxopropyl phosphate (AHAP). The sequence is that of 4-hydroxythreonine-4-phosphate dehydrogenase from Shewanella denitrificans (strain OS217 / ATCC BAA-1090 / DSM 15013).